The chain runs to 611 residues: Elongation factor 1 alpha-like protein (611 aa).

2 disordered regions span residues 1–21 (MAYS…DEGE) and 105–138 (SISQ…DEKT). At S124 the chain carries Phosphoserine. The span at 126–138 (GERNGEEANDEKT) shows a compositional bias: basic and acidic residues. Positions 165-390 (LPHLSFVVLG…LENAAFKISK (226 aa)) constitute a tr-type G domain. The segment at 174-181 (GHVDAGKS) is G1. 174–181 (GHVDAGKS) contributes to the GTP binding site. The segment at 230-234 (GVTVS) is G2. The segment at 251–254 (DAPG) is G3. Residues 313 to 316 (NKMD) and 352 to 354 (SGF) each bind GTP. Residues 313–316 (NKMD) are G4. A G5 region spans residues 352 to 354 (SGF).

The protein belongs to the TRAFAC class translation factor GTPase superfamily. Classic translation factor GTPase family. In terms of assembly, component of the Dom34-Hbs1 complex, also named Pelota-HBS1L complex, composed of DOM34 and HBS1.

The protein resides in the cytoplasm. It catalyses the reaction GTP + H2O = GDP + phosphate + H(+). Its function is as follows. GTPase component of the Dom34-Hbs1 complex, a complex that recognizes stalled ribosomes and triggers the No-Go Decay (NGD) pathway. The Dom34-Hbs1 complex recognizes ribosomes stalled at the 3' end of an mRNA and engages stalled ribosomes by destabilizing mRNA in the mRNA channel. Following ribosome-binding, the Pelota-HBS1L complex promotes the disassembly of stalled ribosomes, followed by degradation of damaged mRNAs as part of the NGD pathway. The Dom34-Hbs1 complex is also involved in non-functional rRNA decay. The protein is Elongation factor 1 alpha-like protein of Saccharomyces cerevisiae (strain ATCC 204508 / S288c) (Baker's yeast).